Reading from the N-terminus, the 290-residue chain is Protoheme IX farnesyltransferase 1 (290 aa).

8 helical membrane passes run 8-28 (ITKP…FFLA), 36-56 (FLLL…GCVV), 85-105 (AAFV…FQVV), 108-128 (LSAV…TMWY), 131-151 (NSVY…LVGY), 152-172 (LAVT…FCLW), 211-231 (AYVV…EAGY), and 269-289 (LLVV…LPFI).

Belongs to the UbiA prenyltransferase family. Protoheme IX farnesyltransferase subfamily.

The protein resides in the cell inner membrane. It catalyses the reaction heme b + (2E,6E)-farnesyl diphosphate + H2O = Fe(II)-heme o + diphosphate. It participates in porphyrin-containing compound metabolism; heme O biosynthesis; heme O from protoheme: step 1/1. Its function is as follows. Converts heme B (protoheme IX) to heme O by substitution of the vinyl group on carbon 2 of heme B porphyrin ring with a hydroxyethyl farnesyl side group. In Vibrio campbellii (strain ATCC BAA-1116), this protein is Protoheme IX farnesyltransferase 1.